The sequence spans 937 residues: Isoleucine--tRNA ligase (937 aa).

The 'HIGH' region signature appears at 58-68 (PYANGHIHLGT). Glutamate 566 is a binding site for L-isoleucyl-5'-AMP. The 'KMSKS' region signature appears at 607-611 (KMSKS). Lysine 610 contributes to the ATP binding site. Residues cysteine 906, cysteine 909, cysteine 925, and cysteine 928 each coordinate Zn(2+).

Belongs to the class-I aminoacyl-tRNA synthetase family. IleS type 1 subfamily. As to quaternary structure, monomer. Zn(2+) is required as a cofactor.

The protein resides in the cytoplasm. It carries out the reaction tRNA(Ile) + L-isoleucine + ATP = L-isoleucyl-tRNA(Ile) + AMP + diphosphate. Catalyzes the attachment of isoleucine to tRNA(Ile). As IleRS can inadvertently accommodate and process structurally similar amino acids such as valine, to avoid such errors it has two additional distinct tRNA(Ile)-dependent editing activities. One activity is designated as 'pretransfer' editing and involves the hydrolysis of activated Val-AMP. The other activity is designated 'posttransfer' editing and involves deacylation of mischarged Val-tRNA(Ile). The protein is Isoleucine--tRNA ligase of Lawsonia intracellularis (strain PHE/MN1-00).